Consider the following 81-residue polypeptide: U17-lycotoxin-Ls1a (81 aa).

The N-terminal stretch at 1–22 (MSSKVQAVLLLVGVITFLAVHA) is a signal peptide. The propeptide occupies 23–34 (QEELSENTESER). 3 disulfide bridges follow: cysteine 36–cysteine 51, cysteine 50–cysteine 67, and cysteine 58–cysteine 65.

This sequence belongs to the neurotoxin 02 (plectoxin) family. As to expression, expressed by the venom gland.

It localises to the secreted. This is U17-lycotoxin-Ls1a from Lycosa singoriensis (Wolf spider).